Reading from the N-terminus, the 739-residue chain is G2 and S phase-expressed protein 1 (739 aa).

Residues 1–11 are compositionally biased toward basic and acidic residues; sequence MEGGGGRDEPS. A disordered region spans residues 1–20; that stretch reads MEGGGGRDEPSACRAGDVNM. The residue at position 91 (S91) is a Phosphoserine. Disordered stretches follow at residues 116–136, 149–306, and 320–639; these read SRNQ…GVER, EKEK…AIPV, and PGST…GDAA. Residues 149–165 show a composition bias toward basic and acidic residues; that stretch reads EKEKEMKKSPTSLKRET. S157 carries the phosphoserine modification. The residue at position 159 (T159) is a Phosphothreonine. 5 positions are modified to phosphoserine: S171, S187, S208, S247, and S262. Low complexity predominate over residues 181 to 195; the sequence is PRLLASSPALPSSGA. Over residues 268 to 280 the composition is skewed to basic and acidic residues; that stretch reads IPAEKESHRDVLP. Low complexity-rich tracts occupy residues 284–294 and 330–342; these read APGAVNVPAAG and SSSG…ASSA. S331 bears the Phosphoserine mark. The span at 360–372 shows a compositional bias: polar residues; the sequence is PANSSRPLSNISK. Over residues 411-424 the composition is skewed to low complexity; the sequence is TAPPSASPTQPQTP. Polar residues-rich tracts occupy residues 430-446 and 455-470; these read WLNS…LNKT and CLNS…TNQF. The residue at position 480 (S480) is a Phosphoserine. A compositionally biased stretch (polar residues) spans 481-522; sequence PDSSTPKLSRAQRPQSCTSVGRVTVHSTPVRRSSGPAPQSLL. T485 is modified (phosphothreonine). A phosphoserine mark is found at S496, S499, S514, S520, S523, and S528. T532 is subject to Phosphothreonine. Phosphoserine is present on residues S535 and S555. Residues 577 to 590 are compositionally biased toward basic and acidic residues; the sequence is EPTRESNRKTDSRL. 2 positions are modified to phosphoserine: S594 and S611. The residue at position 696 (T696) is a Phosphothreonine. 5 positions are modified to phosphoserine: S707, S717, S718, S724, and S734.

Post-translationally, phosphorylated in mitosis.

It localises to the cytoplasm. Its subcellular location is the cytoskeleton. In terms of biological role, may be involved in p53-induced cell cycle arrest in G2/M phase by interfering with microtubule rearrangements that are required to enter mitosis. Overexpression delays G2/M phase progression. The polypeptide is G2 and S phase-expressed protein 1 (Homo sapiens (Human)).